The sequence spans 173 residues: Regulator of ribonuclease activity A (173 aa).

This sequence belongs to the RraA family. As to quaternary structure, homotrimer. Binds to both RNA-binding sites in the C-terminal region of Rne and to RhlB.

The protein resides in the cytoplasm. In terms of biological role, globally modulates RNA abundance by binding to RNase E (Rne) and regulating its endonucleolytic activity. Can modulate Rne action in a substrate-dependent manner by altering the composition of the degradosome. Modulates RNA-binding and helicase activities of the degradosome. The polypeptide is Regulator of ribonuclease activity A (Vibrio vulnificus (strain YJ016)).